We begin with the raw amino-acid sequence, 34 residues long: Turripeptide Pal9a (34 aa).

Disulfide bonds link cysteine 3–cysteine 17, cysteine 8–cysteine 19, and cysteine 13–cysteine 30. Glutamine 34 carries the glutamine amide modification.

Expressed by the venom duct.

It is found in the secreted. The sequence is that of Turripeptide Pal9a from Polystira albida (White giant-turris).